Here is a 397-residue protein sequence, read N- to C-terminus: Chorismate synthase (397 aa).

Arginine 40 and arginine 46 together coordinate NADP(+). FMN is bound by residues 129–131, 257–258, glycine 302, 317–321, and arginine 343; these read RAS, QA, and KPIAT.

Belongs to the chorismate synthase family. Homotetramer. The cofactor is FMNH2.

It catalyses the reaction 5-O-(1-carboxyvinyl)-3-phosphoshikimate = chorismate + phosphate. It functions in the pathway metabolic intermediate biosynthesis; chorismate biosynthesis; chorismate from D-erythrose 4-phosphate and phosphoenolpyruvate: step 7/7. Its function is as follows. Catalyzes the anti-1,4-elimination of the C-3 phosphate and the C-6 proR hydrogen from 5-enolpyruvylshikimate-3-phosphate (EPSP) to yield chorismate, which is the branch point compound that serves as the starting substrate for the three terminal pathways of aromatic amino acid biosynthesis. This reaction introduces a second double bond into the aromatic ring system. The sequence is that of Chorismate synthase from Prosthecochloris aestuarii (strain DSM 271 / SK 413).